A 131-amino-acid polypeptide reads, in one-letter code: MAAARAAVPIAVFLLLVLAEADPAAATRSPSAFVQNAIYSNRITIFSKTYCPYSMRAKRIFRDLKENPYIVELDLREDGREIQSVLLDLVGRHTVPQVFVNGQHVGGSDDTANAHSNGQLQKLLGNSQSQR.

The 101-residue stretch at 31–131 (SAFVQNAIYS…KLLGNSQSQR (101 aa)) folds into the Glutaredoxin domain. Residue Cys51 participates in [2Fe-2S] cluster binding.

Belongs to the glutaredoxin family. CPYC subfamily.

Its subcellular location is the cytoplasm. Functionally, may only reduce GSH-thiol disulfides, but not protein disulfides. In Oryza sativa subsp. japonica (Rice), this protein is Monothiol glutaredoxin-S6 (GRXS6).